Consider the following 93-residue polypeptide: Alpha-elapitoxin-Oh2a (93 aa).

A signal peptide spans 1–21; the sequence is MKTLLLTLVVVTIVCLDLGYT. Cystine bridges form between Cys-24-Cys-43, Cys-36-Cys-64, Cys-49-Cys-53, Cys-68-Cys-79, and Cys-80-Cys-85.

It belongs to the three-finger toxin family. Long-chain subfamily. Type II alpha-neurotoxin sub-subfamily. In terms of tissue distribution, expressed by the venom gland.

The protein resides in the secreted. In terms of biological role, binds with high affinity to muscular (alpha-1/CHRNA1) and neuronal (alpha-7/CHRNA7) nicotinic acetylcholine receptor (nAChR) and inhibits acetylcholine from binding to the receptor, thereby impairing neuromuscular and neuronal transmission. This chain is Alpha-elapitoxin-Oh2a, found in Ophiophagus hannah (King cobra).